A 347-amino-acid chain; its full sequence is Globoside alpha-1,3-N-acetylgalactosaminyltransferase 1 (347 aa).

The Cytoplasmic segment spans residues 1-5 (MRCRR). Residues 6-26 (LALGLGFSLLSGIALWSLWIY) traverse the membrane as a helical; Signal-anchor for type II membrane protein segment. At 27 to 347 (METWLPFSYV…LDKATSWLRS (321 aa)) the chain is on the lumenal side. N-linked (GlcNAc...) asparagine glycosylation is present at asparagine 108. Residues 116–121 (FAVGKY), 206–208 (DVD), and 228–231 (HPGY) contribute to the substrate site. Residues aspartate 206 and aspartate 208 each contribute to the Mn(2+) site. Glutamate 298 (nucleophile) is an active-site residue.

The protein belongs to the glycosyltransferase 6 family. Mn(2+) is required as a cofactor.

The protein resides in the golgi apparatus membrane. The catalysed reaction is a globoside Gb4Cer (d18:1(4E)) + UDP-N-acetyl-alpha-D-galactosamine = a globoside Forssman (d18:1(4E)) + UDP + H(+). It catalyses the reaction a globoside Gb4Cer + UDP-N-acetyl-alpha-D-galactosamine = a globoside IV3GalNAc-Gb4Cer + UDP + H(+). The protein operates within protein modification; protein glycosylation. Its function is as follows. Catalyzes the formation of Forssman glycolipid via the addition of N-acetylgalactosamine (GalNAc) in alpha-1,3-linkage to GalNAcb-1,3Gala-1,4Galb-1,4GlcCer (Gb4Cer). Forssman glycolipid (also called Forssman antigen; FG) probably serves for adherence of some pathogens such as E.coli uropathogenic strains. The sequence is that of Globoside alpha-1,3-N-acetylgalactosaminyltransferase 1 from Canis lupus familiaris (Dog).